The sequence spans 115 residues: Putative UPF0320 protein YKL225W (115 aa).

The protein belongs to the UPF0320 family.

The sequence is that of Putative UPF0320 protein YKL225W from Saccharomyces cerevisiae (strain ATCC 204508 / S288c) (Baker's yeast).